We begin with the raw amino-acid sequence, 3124 residues long: Collagen alpha-1(XII) chain (3124 aa).

A signal peptide spans 1–23; the sequence is MRTALCSAVAALCAAALLSSIEA. The region spanning 27 to 117 is the Fibronectin type-III 1 domain; it reads PPSDLNFTII…GQLTIQTGGP (91 aa). Asn-32 is a glycosylation site (N-linked (GlcNAc...) asparagine). A VWFA 1 domain is found at 139-311; the sequence is DLVFLVDGSW…DGIVDIQNEI (173 aa). An O-linked (Xyl...) (chondroitin sulfate) serine glycan is attached at Ser-328. One can recognise a Fibronectin type-III 2 domain in the interval 335–424; that stretch reads PASNLVATQI…ITIMEKTQQV (90 aa). Residues 439–615 form the VWFA 2 domain; it reads DVVFLVDGSY…RISFELTQSV (177 aa). 6 consecutive Fibronectin type-III domains span residues 633-722, 724-815, 816-906, 908-998, 999-1087, and 1089-1179; these read PAKN…LEVK, APRN…VRGN, PRNL…LEER, SPRN…VSQS, ARTV…ASPF, and PPRN…TLSD. Ser-797, Ser-890, and Ser-981 each carry an O-linked (Xyl...) (chondroitin sulfate) serine glycan. 3 N-linked (GlcNAc...) asparagine glycosylation sites follow: Asn-1006, Asn-1032, and Asn-1044. Residues 1075 to 1100 are disordered; it reads KSRKAEGTTASPFKPPRNLRTSDSTM. Residues 1199–1371 form the VWFA 3 domain; it reads DIVLLVDGSW…SFLASIGEDV (173 aa). 10 consecutive Fibronectin type-III domains span residues 1387–1476, 1477–1568, 1569–1659, 1660–1756, 1759–1853, 1854–1939, 1940–2030, 2031–2121, 2122–2210, and 2211–2299; these read PPSN…YPLS, SVRN…LPLP, GPRG…VPSP, VNLR…TPAP, GPRN…TVKN, MLVY…LERG, TPRN…LPRS, GPRN…VGLL, PPQN…LYLN, and VTDL…LKPT. Asn-1512 is a glycosylation site (N-linked (GlcNAc...) asparagine). Asn-1767 carries an N-linked (GlcNAc...) asparagine glycan. Asn-2210 and Asn-2273 each carry an N-linked (GlcNAc...) asparagine glycan. The VWFA 4 domain maps to 2327 to 2500; it reads DIVFLTDASW…DAFEKIQDNL (174 aa). The segment at 2455 to 2750 is nonhelical region (NC3); sequence SGFSVFVVGV…NACTCTQDSV (296 aa). The Laminin G-like domain maps to 2524-2716; sequence GFKMLESYNL…IQNFDIVCSP (193 aa). 2 N-linked (GlcNAc...) asparagine glycosylation sites follow: Asn-2532 and Asn-2683. 2 disordered regions span residues 2749 to 2900 and 2935 to 3080; these read SVGP…GDRG and PNDY…EGEP. 3 Collagen-like domains span residues 2751-2802, 2807-2858, and 2859-2900; these read GPPG…GPNG, GEPG…GPRG, and PPGP…GDRG. The segment at 2751–2902 is triple-helical region (COL2) with 1 imperfection; the sequence is GPPGPPGPPG…KGEKGDRGDI (152 aa). Composition is skewed to pro residues over residues 2752–2761 and 2788–2798; these read PPGPPGPPGG and PPGPQGPPGPQ. A compositionally biased stretch (low complexity) spans 2821-2830; the sequence is PGLPGRSGTP. Positions 2832 to 2841 are enriched in pro residues; it reads LPGPPGPVGP. Composition is skewed to low complexity over residues 2842 to 2854 and 2865 to 2878; these read PGERGFTGKDGPT and APGVPGVAGPSGKP. Residues 2899-2901 carry the Cell attachment site motif; that stretch reads RGD. The segment at 2903–2945 is nonhelical region (NC2); that stretch reads ASQNMMRAVARQVCEQLINGQMSRFNQMLNQIPNDYYSNRNQP. Polar residues predominate over residues 2935–2944; the sequence is PNDYYSNRNQ. Over residues 2945–2954 the composition is skewed to pro residues; sequence PGPPGPPGPP. A Collagen-like 4 domain is found at 2945–2994; that stretch reads PGPPGPPGPPGAAGTRGEPGPGGRPGFPGPPGVQGPPGERGMPGEKGERG. Positions 2946 to 3048 are triple-helical region (COL1) with 2 imperfections; the sequence is GPPGPPGPPG…RGPPGPPGYC (103 aa). A compositionally biased stretch (gly residues) spans 2961–2970; it reads GEPGPGGRPG. Low complexity predominate over residues 3010–3024; sequence QGESRTGPPGSTGSR. Residues 3049-3124 form a nonhelical region (NC1) region; that stretch reads DSSQCASIPY…SLSRKAKRKP (76 aa).

Belongs to the fibril-associated collagens with interrupted helices (FACIT) family. As to quaternary structure, trimer of identical chains each containing 190 kDa of non-triple-helical sequences. The triple-helical tail is stabilized by disulfide bonds at each end. Post-translationally, prolines at the third position of the tripeptide repeating unit (G-X-Y) are hydroxylated in some or all of the chains. In terms of processing, O-glycosylated; glycosaminoglycan of chondroitin-sulfate type. Type XII collagen is present in tendons, ligaments, perichondrium, and periosteum, all dense connective tissues containing type I collagen.

Its subcellular location is the secreted. It is found in the extracellular space. It localises to the extracellular matrix. Type XII collagen interacts with type I collagen-containing fibrils, the COL1 domain could be associated with the surface of the fibrils, and the COL2 and NC3 domains may be localized in the perifibrillar matrix. The chain is Collagen alpha-1(XII) chain (COL12A1) from Gallus gallus (Chicken).